The primary structure comprises 211 residues: Thiamine-phosphate synthase (211 aa).

4-amino-2-methyl-5-(diphosphooxymethyl)pyrimidine-binding positions include 37-41 and Asn69; that span reads QLRIK. Mg(2+)-binding residues include Asp70 and Asp89. 4-amino-2-methyl-5-(diphosphooxymethyl)pyrimidine is bound at residue Ser108. 134–136 serves as a coordination point for 2-[(2R,5Z)-2-carboxy-4-methylthiazol-5(2H)-ylidene]ethyl phosphate; that stretch reads TQT. Residue Lys137 coordinates 4-amino-2-methyl-5-(diphosphooxymethyl)pyrimidine. 2-[(2R,5Z)-2-carboxy-4-methylthiazol-5(2H)-ylidene]ethyl phosphate contacts are provided by residues Gly166 and 186–187; that span reads VS.

This sequence belongs to the thiamine-phosphate synthase family. Mg(2+) serves as cofactor.

The catalysed reaction is 2-[(2R,5Z)-2-carboxy-4-methylthiazol-5(2H)-ylidene]ethyl phosphate + 4-amino-2-methyl-5-(diphosphooxymethyl)pyrimidine + 2 H(+) = thiamine phosphate + CO2 + diphosphate. The enzyme catalyses 2-(2-carboxy-4-methylthiazol-5-yl)ethyl phosphate + 4-amino-2-methyl-5-(diphosphooxymethyl)pyrimidine + 2 H(+) = thiamine phosphate + CO2 + diphosphate. It catalyses the reaction 4-methyl-5-(2-phosphooxyethyl)-thiazole + 4-amino-2-methyl-5-(diphosphooxymethyl)pyrimidine + H(+) = thiamine phosphate + diphosphate. It participates in cofactor biosynthesis; thiamine diphosphate biosynthesis; thiamine phosphate from 4-amino-2-methyl-5-diphosphomethylpyrimidine and 4-methyl-5-(2-phosphoethyl)-thiazole: step 1/1. Its function is as follows. Condenses 4-methyl-5-(beta-hydroxyethyl)thiazole monophosphate (THZ-P) and 2-methyl-4-amino-5-hydroxymethyl pyrimidine pyrophosphate (HMP-PP) to form thiamine monophosphate (TMP). The polypeptide is Thiamine-phosphate synthase (Escherichia coli O9:H4 (strain HS)).